The sequence spans 336 residues: Holliday junction branch migration complex subunit RuvB (336 aa).

Positions 4-184 (SDRLISSQSI…FGIVQRLEYY (181 aa)) are large ATPase domain (RuvB-L). Residues Ile-23, Arg-24, Gly-65, Lys-68, Thr-69, Thr-70, 131-133 (EDY), Arg-174, Tyr-184, and Arg-221 each bind ATP. Mg(2+) is bound at residue Thr-69. The small ATPAse domain (RuvB-S) stretch occupies residues 185-255 (SVDSLTQIVA…MAQQALEMLE (71 aa)). Residues 258-336 (QHGFDLMDRK…HFGFSAIEQE (79 aa)) form a head domain (RuvB-H) region. 2 residues coordinate DNA: Arg-313 and Arg-318.

Belongs to the RuvB family. Homohexamer. Forms an RuvA(8)-RuvB(12)-Holliday junction (HJ) complex. HJ DNA is sandwiched between 2 RuvA tetramers; dsDNA enters through RuvA and exits via RuvB. An RuvB hexamer assembles on each DNA strand where it exits the tetramer. Each RuvB hexamer is contacted by two RuvA subunits (via domain III) on 2 adjacent RuvB subunits; this complex drives branch migration. In the full resolvosome a probable DNA-RuvA(4)-RuvB(12)-RuvC(2) complex forms which resolves the HJ.

It is found in the cytoplasm. The enzyme catalyses ATP + H2O = ADP + phosphate + H(+). Its function is as follows. The RuvA-RuvB-RuvC complex processes Holliday junction (HJ) DNA during genetic recombination and DNA repair, while the RuvA-RuvB complex plays an important role in the rescue of blocked DNA replication forks via replication fork reversal (RFR). RuvA specifically binds to HJ cruciform DNA, conferring on it an open structure. The RuvB hexamer acts as an ATP-dependent pump, pulling dsDNA into and through the RuvAB complex. RuvB forms 2 homohexamers on either side of HJ DNA bound by 1 or 2 RuvA tetramers; 4 subunits per hexamer contact DNA at a time. Coordinated motions by a converter formed by DNA-disengaged RuvB subunits stimulates ATP hydrolysis and nucleotide exchange. Immobilization of the converter enables RuvB to convert the ATP-contained energy into a lever motion, pulling 2 nucleotides of DNA out of the RuvA tetramer per ATP hydrolyzed, thus driving DNA branch migration. The RuvB motors rotate together with the DNA substrate, which together with the progressing nucleotide cycle form the mechanistic basis for DNA recombination by continuous HJ branch migration. Branch migration allows RuvC to scan DNA until it finds its consensus sequence, where it cleaves and resolves cruciform DNA. The chain is Holliday junction branch migration complex subunit RuvB from Legionella pneumophila subsp. pneumophila (strain Philadelphia 1 / ATCC 33152 / DSM 7513).